Reading from the N-terminus, the 536-residue chain is 2-isopropylmalate synthase (536 aa).

In terms of domain architecture, Pyruvate carboxyltransferase spans 8 to 269 (IIIFDTTLRD…YYNPFLGRPV (262 aa)). The Mn(2+) site is built by Asp-17, His-208, His-210, and Asn-244. The segment at 408-536 (RLELVQVSCG…KEKAAVTSAS (129 aa)) is regulatory domain.

Belongs to the alpha-IPM synthase/homocitrate synthase family. LeuA type 1 subfamily. In terms of assembly, homodimer. The cofactor is Mn(2+).

Its subcellular location is the cytoplasm. It catalyses the reaction 3-methyl-2-oxobutanoate + acetyl-CoA + H2O = (2S)-2-isopropylmalate + CoA + H(+). It functions in the pathway amino-acid biosynthesis; L-leucine biosynthesis; L-leucine from 3-methyl-2-oxobutanoate: step 1/4. In terms of biological role, catalyzes the condensation of the acetyl group of acetyl-CoA with 3-methyl-2-oxobutanoate (2-ketoisovalerate) to form 3-carboxy-3-hydroxy-4-methylpentanoate (2-isopropylmalate). The chain is 2-isopropylmalate synthase from Gloeothece citriformis (strain PCC 7424) (Cyanothece sp. (strain PCC 7424)).